The chain runs to 3059 residues: MATQVIMVGEFKILEVNCKPHAPVAAIHVPTQTPKTNDIKWADLEFTLAKSLQRQAHGVVKVDKHGTARIKRASKHHMSCLEQQMADEVAEKEAFMAAPTQLVTSIIFAGTTPPSMMETETIVKKIHTVGKRAKVMRKRSYITPPTDKSLRNHGVTPYSVQQLCRTLGNLSKRTGISLEVVGKTSKATKLRFTKTSFGHMARVQLKHHDGRMHRRDLVVDTSTTTIMQTLFLKTARTNANLDVLTHGSSGLVFWNYLVTGQRMRTRDNFIIVRGRCNGILVDARAKLSESTMLSTHHYSTGDVFWRGFNRTFLENKPINLDHVCSSDFSVEECGSIAALICQSLLPCGKITCRACAAKNLNMDEDTFKEFQTQRAREISAVIISEHPNFACVSQFIDRYFSHQRVLNPNVNAYREILKIVGGFTQSPYTHIQELNEILVLGGRATPEQLGSASAHLLEITRFVRNRTDNIKKGSLALFRNKISAKAHVNTALMCDNQLDRNGNLIWGERGYHAKRFFSNYFDIITPGGGYKQYIERRVPNGIRKLAIGNLIVTTNLEALREQLEGESIEKKAVTKACVSMSDNNYKYPCCCVTLDDGTPLYSTFIMPTKNHLVIGNSGDPKFLDLPADISTQMYIAKSGYCYINIFLAMLVNVDESDAKDFTKKVRDIIVPDLGEWPTLIDVATSCSLLSAFYPATSAAELPRILVDHDLKTMHVIDSYGSLNTGYHVLKANTIRQLIQFASNSLDSEMKHYRVGGTSNSQINGYATIKMLAKAVYRPKLMKEIIHEQPFMLVMSLMSPGILIALANSGALEMGIHHWIREGDSLVKMAHMLRTVAQNVSVARATWVQQEIISDSAQQMLETILNGTIPNVSYFQAIQYLTMLAASKEVDAEVRVTGYYTFKLQTSELLEKTYLSLLEDSWQELSYFGRFQAIRHSRRYCTAGTIVVKPERHVDLGGIYATSYQFALAKQMEYSKKAVCQAVNGLQARFNNITSQIYCKILNWPKRLFPDLVKFINTMLAITVALQLYIAFATILRHHQQCKQDSLELEYCKKERQLITLYDFFIAKQPYATEEEFMAHVDEQNPDLSNFAREYCAEVVLFQAKASEQVNFERIIAFISLVLMMFDRERSDCVYRSLTKLKSLMSTVENTVQFQSLDDIGPTLEEKNMTIDFDLDTDTIVGKSIIGHTFKEWWDVQLNTNRIVPHYRTEGHFMEFTRANAPTIAHQIAHDLHTDIMLRGAVGSGKSTGLPYHLSKKGTVLLLEPTRPLAENVTKQLKSDPFHVSPTLRMRGMAVFGSTPIHVMTTGFALHYLANNLKMLSTYDFIIIDEFHVHDSNAIALRNLLHEHNYQGKLIKVSATPPGREVEFSTQYPVEIRVEDQVSFQDFVKAQGNGSNLDLTSKCDNLLVYVASYNEVDQLSKLLLERHFLVTKVDGRSMKLGQVEIITKGSANKKHFIVATNIIENGVTLDIDAVIDFGMKVVPFLDSDNRMISYNKVSISYGERIQRLGRVGRNKAGVALRIGHTEKGISDVPVVIATQAAFLGFVYGLPISTQSVTTQVLSNVTLKQARTMVQFELPIFYMAHLVRYDGTMHPAIHNELKKYKLRDSEIQLRKLAIPSKCVPIWMTGKAYRLLTHNSQIPDDVRVPFLTKEIPDKLHENVWAIVEKFKCDAGIGRMTSAQASKVAYTLETDIHSVQRTILIIDQLLEREMQKQSHFEMVTNQSCSSGMLSLQTMMNAIQSRYAKNHTAGNIEILQRAKAQLLEFSNLSGDISTESALREFGYLEAVQFQSGTQVSNFLGLEGHWKKSLITKDLLIVGGVCVGAAWMIGEYFFKKSKGVVAFQGIISDRGKKLKFARARDEKMGHYVEAPDSTLEHYFGSAYTKKGKTKGKTHGMGKKNHRFVNMYGFDPSDYTFIRYVDPLTGYTLDESPYTDIRLIQSQFSDIREQQLLNDELERNMVHYKPGVQGYLVKDKTSQILKIDLTPHIPLKVCDATNNIAGHPDREGELRQTGKGQLLDYAELPQKKESVEFESTSMFRGVRDYNPISSVICQLENESEGRTTQLFGLGFGPFIITNQHLFVRNNGSLTVRSQMGVFKVNSTVALQMRPVEGRDVLIIKMPKDFPPFPQRLKFRQPTHSEKVCLILTNFQQKSSSSMVSETSILYQRKNTYFWKHWISTKEGHCGSPIVSTTDGAILGIHSLSNMTNTSNYFACFPKGFTETYLATESVHEWVKGWKFNANNVCWGSFHLQDSKPTKEFKTVKLVTDLLGEAVYTQGCDSKWLFNAAHTNIQAVAQLESNLVTKHTVKGKCKLFETYLNVDKAAHDFFSKYMGFYKPSKLNREAYTQDLMKYSKVIQVGEVDCGVFESALTGLLHNLGRWGFTTACYTTDEDSIYTALNMKAAVGALYRGKKRDYFDAMSPSEREHLLFLSCKRLYFGQLGVWNGSLKAELRPKEKVDLNKTRTFTAAPIETLLGGKVCVDDFNNMFYSLHLKAPWSVGMTKFYGTWNQLMCKLPDDWVYCDADGSQFDSSISPYMINAVLRIRLHFMEDWDIGSQMLQNLYTEIGTHQSQHQMAQLLKKFKGNNSGQPSTVVDNTLLVVLALHYALLKSGIPLEEQDSVCAYGVNGDDLLIAIRPDMEHKLDGFQALFSELGLNYEFNSRSKDKKDLWFMSHKAIQCGEILIPKLEEERIVSILEWDRSHEPIHRLEAICASMVESWGYPELTHEIRRFYAWVLEQSPYNALATTGLAPYIAESALKTLYTNVHPTSTELEKYSIQFDEQMDEEDDMVYFQAETLDASEALAQKSEGRKKERESNSSKAVAVKDKDVDLGTAGTHSVPRLKSMTSKLTLPMLKGKSVVNLDHLLSYKPKQVDLSNARATHEQFQNWYDGVMASYELEESSMEIILNGFMVWCIENGTSPDINGVWTMMDNEEQVSYPLKPMLDHAKPSLRQIMRHFSALAEAYIEMRSREKPYMPRYGLQRNLRDQSLARYAFDFYEITATTPIRAKEAHLQMKAAALKNSNTNMFGLDGNVTTSEEDTERHTATDVNRNMHHLLGVKGV.

Positions 154–298 (GVTPYSVQQL…ESTMLSTHHY (145 aa)) constitute a Peptidase S30 domain. Residues histidine 207, aspartate 216, and serine 249 each act as for P1 proteinase activity in the active site. Positions 349-352 (KITC) match the Involved in interaction with stylet and aphid transmission motif. Positions 607-609 (PTK) match the Involved in virions binding and aphid transmission motif. The Peptidase C6 domain maps to 633–755 (MYIAKSGYCY…DSEMKHYRVG (123 aa)). Active-site for helper component proteinase activity residues include cysteine 641 and histidine 714. The 153-residue stretch at 1226-1378 (QIAHDLHTDI…TQYPVEIRVE (153 aa)) folds into the Helicase ATP-binding domain. 1239–1246 (GAVGSGKS) contacts ATP. Positions 1328-1331 (DEFH) match the DEFH box motif. The region spanning 1397–1556 (DLTSKCDNLL…GLPISTQSVT (160 aa)) is the Helicase C-terminal domain. Residues 1883–1890 (KKGKTKGK) carry the Nuclear localization signal motif. Residue tyrosine 1905 is modified to O-(5'-phospho-RNA)-tyrosine. Positions 2032–2250 (STSMFRGVRD…VCWGSFHLQD (219 aa)) constitute a Peptidase C4 domain. Active-site for nuclear inclusion protein A activity residues include histidine 2077, aspartate 2112, and cysteine 2182. The region spanning 2516-2640 (WVYCDADGSQ…AIRPDMEHKL (125 aa)) is the RdRp catalytic domain. Threonine 3042 carries the post-translational modification Phosphothreonine.

It belongs to the potyviridae genome polyprotein family. Interacts with host eIF4E protein (via cap-binding region); this interaction mediates the translation of the VPg-viral RNA conjugates. Part of a complex that comprises VPg, RNA, host EIF4E and EIF4G; this interaction mediates the translation of the VPg-viral RNA conjugates. VPg is uridylylated by the polymerase and is covalently attached to the 5'-end of the genomic RNA. This uridylylated form acts as a nucleotide-peptide primer for the polymerase. Post-translationally, phosphorylation inhibits the RNA-binding capacity of the capsid protein. In terms of processing, potyviral RNA is expressed as two polyproteins which undergo post-translational proteolytic processing. Genome polyprotein is processed by NIa-pro, P1 and HC-pro proteinases resulting in the production of at least ten individual proteins. P3N-PIPO polyprotein is cleaved by P1 and HC-pro proteinases resulting in the production of three individual proteins. The P1 proteinase and the HC-pro cleave only their respective C-termini autocatalytically. 6K1 is essential for proper proteolytic separation of P3 from CI.

It is found in the host cytoplasmic vesicle. It localises to the host nucleus. The protein resides in the virion. The enzyme catalyses RNA(n) + a ribonucleoside 5'-triphosphate = RNA(n+1) + diphosphate. It catalyses the reaction Hydrolyzes glutaminyl bonds, and activity is further restricted by preferences for the amino acids in P6 - P1' that vary with the species of potyvirus, e.g. Glu-Xaa-Xaa-Tyr-Xaa-Gln-|-(Ser or Gly) for the enzyme from tobacco etch virus. The natural substrate is the viral polyprotein, but other proteins and oligopeptides containing the appropriate consensus sequence are also cleaved.. The catalysed reaction is Hydrolyzes a Gly-|-Gly bond at its own C-terminus, commonly in the sequence -Tyr-Xaa-Val-Gly-|-Gly, in the processing of the potyviral polyprotein.. Required for aphid transmission and also has proteolytic activity. Only cleaves a Gly-Gly dipeptide at its own C-terminus. Interacts with virions and aphid stylets. Acts as a suppressor of RNA-mediated gene silencing, also known as post-transcriptional gene silencing (PTGS), a mechanism of plant viral defense that limits the accumulation of viral RNAs. May have RNA-binding activity. In terms of biological role, has helicase activity. It may be involved in replication. Its function is as follows. Indispensable for virus replication. Reduces the abundance of host transcripts related to jasmonic acid biosynthesis therefore altering the host defenses. In order to increase its own stability, decreases host protein degradation pathways. Functionally, indispensable for virus replication. Mediates the cap-independent, EIF4E-dependent translation of viral genomic RNAs. Binds to the cap-binding site of host EIF4E and thus interferes with the host EIF4E-dependent mRNA export and translation. VPg-RNA directly binds EIF4E and is a template for transcription. Also forms trimeric complexes with EIF4E-EIF4G, which are templates for translation. In terms of biological role, has RNA-binding and proteolytic activities. Its function is as follows. An RNA-dependent RNA polymerase that plays an essential role in the virus replication. Functionally, involved in aphid transmission, cell-to-cell and systemis movement, encapsidation of the viral RNA and in the regulation of viral RNA amplification. In Potato virus A (PVA), this protein is Genome polyprotein.